The sequence spans 212 residues: Suppressor of cytokine signaling 1 (212 aa).

The interval 1-55 is disordered; sequence MVARNQVAADNAISPAAEPRRRSEPSSSSSSSSPAAPVRPRPCPAVPAPAPGDTH. A compositionally biased stretch (low complexity) spans 25-36; it reads PSSSSSSSSPAA. Pro residues predominate over residues 37 to 50; that stretch reads PVRPRPCPAVPAPA. Positions 56-67 are kinase inhibitory region (KIR); that stretch reads FRTFRSHSDYRR. The segment at 68-79 is extended SH2 subdomain (ESS); the sequence is ITRTSALLDACG. The 96-residue stretch at 80 to 175 folds into the SH2 domain; that stretch reads FYWGPLSVHG…PLRQRRVRPL (96 aa). Positions 162 to 211 constitute an SOCS box domain; it reads MLGAPLRQRRVRPLQELCRQRIVAAVGRENLARIPLNPVLRDYLSSFPFQ. The interaction with Elongin BC complex stretch occupies residues 174–183; that stretch reads PLQELCRQRI.

This sequence belongs to the SOCS1 family. As to quaternary structure, interacts with multiple activated proteins of the tyrosine kinase signaling pathway including JAK family kinases, TEC, KIT, GRB2 and VAV. Binding to JAKs is mediated through the KIR and SH2 domain to a phosphorylated tyrosine residue within the JAK JH1 domain. Binds the SH3 domain of GRB2 via diproline determinants in the N-terminus, and the N-terminal regulatory domain of VAV. Interacts with the Elongin BC complex (ELOB and ELOC). Component of an ECS CBC(SOCS1) E3 ubiquitin-protein ligase complex which contains Elongin BC, CUL5, RBX1 and SOCS1. Interacts (via SH2 domain and SOCS box) with TRIM8. Interacts with CUL2. Interacts with AXL and FGFR3. Interacts with INSR. Interacts with TRIM8. Interacts with DCUN1D1. Interacts with IFNGR1. In terms of tissue distribution, high expression in thymus. Lower expression in lung and spleen. Expressed in both Th1 and Th2 cells.

Its subcellular location is the nucleus. The protein localises to the cytoplasmic vesicle. It functions in the pathway protein modification; protein ubiquitination. Functionally, essential negative regulator of type I and type II interferon (IFN) signaling, as well as that of other cytokines, including IL2, IL4, IL6 and leukemia inhibitory factor (LIF). Downregulates cytokine signaling by inhibiting the JAK/STAT signaling pathway. Acts by binding to JAK proteins and to IFNGR1 and inhibiting their kinase activity. In vitro, suppresses Tec protein-tyrosine activity. Regulates IFN-gamma (IFNG)-mediated sensory neuron survival. Probable substrate recognition component of an ECS (Elongin BC-CUL2/5-SOCS-box protein) E3 ubiquitin ligase complex which mediates the ubiquitination and subsequent proteasomal degradation of target proteins. This chain is Suppressor of cytokine signaling 1, found in Mus musculus (Mouse).